The sequence spans 476 residues: Tubulointerstitial nephritis antigen (476 aa).

An N-linked (GlcNAc...) asparagine glycan is attached at asparagine 38. One can recognise an SMB domain in the interval 59-107; that stretch reads NFGCCEDRDDGCVTEFYAANALCYCDKFCDRENSDCCPDYKSFCREEKE. 6 disulfide bridges follow: cysteine 63–cysteine 70, cysteine 70–cysteine 102, cysteine 81–cysteine 83, cysteine 81–cysteine 95, cysteine 87–cysteine 94, and cysteine 95–cysteine 102. Residues asparagine 175, asparagine 314, asparagine 360, and asparagine 455 are each glycosylated (N-linked (GlcNAc...) asparagine).

It belongs to the peptidase C1 family. It has been suggested that the active SMB domain may be permitted considerable disulfide bond heterogeneity or variability, thus 2 alternate disulfide patterns based on 3D structures are described with 1 disulfide bond conserved in both. As to expression, expressed in the kidney cortex, small intestine and cornea.

Its subcellular location is the secreted. The protein resides in the extracellular space. It is found in the extracellular matrix. The protein localises to the basement membrane. Its function is as follows. Mediates adhesion of proximal tubule epithelial cells via integrins alpha3-beta1 and alphaV-beta3. This is a non catalytic peptidase C1 family protein. In Homo sapiens (Human), this protein is Tubulointerstitial nephritis antigen (TINAG).